Consider the following 169-residue polypeptide: Protein yop1 (169 aa).

Residues 1 to 35 (MASFQDRAQHTIAQLDKELSKYPVLNNLERQTSVP) lie on the Cytoplasmic side of the membrane. Residues 36–55 (KVYVILGLVGIYTFLVFFNI) traverse the membrane as a helical segment. Ala-56 is a topological domain (lumenal). A helical membrane pass occupies residues 57–76 (GEFLVNFAGFLIPGYYSLNA). The Cytoplasmic segment spans residues 77-86 (LFTSGKADDT). A helical transmembrane segment spans residues 87–103 (QWLTYWVVYALLTVVES). Residues 104-105 (AI) lie on the Lumenal side of the membrane. A helical transmembrane segment spans residues 106 to 124 (NAAYWFPFYYIFKFVLILW). Topologically, residues 125–169 (MSLPQTNGAQVVFHSFLQPVLGRFFTSGSTSANLRAQADAASKSQ) are cytoplasmic.

The protein belongs to the DP1 family. As to quaternary structure, oligomer.

Its subcellular location is the endoplasmic reticulum membrane. The protein localises to the golgi apparatus membrane. Required to generate and maintain the structure of the tubular endoplasmic reticulum network and the vacuole. Induces high curvature in membranes and causes membrane tubule formation. Involved in membrane/vesicle trafficking. The protein is Protein yop1 (yop1) of Aspergillus fumigatus (strain ATCC MYA-4609 / CBS 101355 / FGSC A1100 / Af293) (Neosartorya fumigata).